A 266-amino-acid polypeptide reads, in one-letter code: Undecaprenyl-diphosphatase (266 aa).

A run of 8 helical transmembrane segments spans residues 1 to 21 (MDTL…FLPI), 39 to 59 (QGLS…VIYF), 83 to 103 (SKLA…GFTA), 111 to 131 (LRGP…LWFA), 149 to 169 (ALLI…RSGI), 183 to 203 (AAAR…ALLM), 218 to 238 (ALAL…YFFL), and 246 to 266 (MTPF…FIYL).

Belongs to the UppP family.

It is found in the cell inner membrane. It catalyses the reaction di-trans,octa-cis-undecaprenyl diphosphate + H2O = di-trans,octa-cis-undecaprenyl phosphate + phosphate + H(+). Its function is as follows. Catalyzes the dephosphorylation of undecaprenyl diphosphate (UPP). Confers resistance to bacitracin. This chain is Undecaprenyl-diphosphatase, found in Shewanella amazonensis (strain ATCC BAA-1098 / SB2B).